A 656-amino-acid chain; its full sequence is Phosphatidylinositol 4,5-bisphosphate-binding protein SLM2 (656 aa).

The 111-residue stretch at 445 to 555 (FEVKSGFLEK…WFGNIKALSS (111 aa)) folds into the PH domain. The segment at 577-605 (AKSNENTTESVTPQVTNEQHTRYDDVSSS) is disordered. The span at 580–594 (NENTTESVTPQVTNE) shows a compositional bias: polar residues. Ser626 is subject to Phosphoserine. The PXIXIT-like, required for interaction with CNA1 and CNA2, and calcineurin-dependent dephosphorylation motif lies at 640–645 (PEFYIE). A phosphoserine mark is found at Ser649 and Ser653.

Heterodimer of SLM1-SLM2. Binds phosphatidylinositol 4,5-bisphosphate, which is required for function. Interacts with the TORC2 subunits AVO2, BIT61 and TOR2. Interacts with the calcineurin catalytic subunits CNA1 and CNA2.

The protein localises to the cell membrane. Its function is as follows. Together with SLM1, effector of the TORC2- and calcineurin-signaling pathways. Phosphorylated and activated by TORC2 under favorable growth conditions. Mediates actin polarization via inhibition of calcineurin-dependent transcription. Upon nutrient limitation or environmental stress, gets dephosphorylated by calcineurin, inhibiting interaction with TORC2, thereby antagonizing TORC2 signaling and mediating calcineurin-dependent actin depolarization. Also functions in heat-induced, calcineurin-mediated uracil permease (FUR4) endocytosis. This Saccharomyces cerevisiae (strain ATCC 204508 / S288c) (Baker's yeast) protein is Phosphatidylinositol 4,5-bisphosphate-binding protein SLM2 (SLM2).